A 451-amino-acid polypeptide reads, in one-letter code: Uronate isomerase (451 aa).

Belongs to the metallo-dependent hydrolases superfamily. Uronate isomerase family.

It catalyses the reaction D-glucuronate = D-fructuronate. It carries out the reaction aldehydo-D-galacturonate = keto-D-tagaturonate. Its pathway is carbohydrate metabolism; pentose and glucuronate interconversion. This is Uronate isomerase from Thermotoga petrophila (strain ATCC BAA-488 / DSM 13995 / JCM 10881 / RKU-1).